Here is a 128-residue protein sequence, read N- to C-terminus: Ribonuclease pancreatic (128 aa).

The disordered stretch occupies residues 1–25; that stretch reads KESSAKKFQRQHIDSSGSPSTNPNY. Residues K7 and R10 each coordinate substrate. The Proton acceptor role is filled by H12. The segment covering 14-25 has biased composition (polar residues); sequence DSSGSPSTNPNY. 4 disulfides stabilise this stretch: C26-C84, C40-C95, C58-C110, and C65-C72. An N-linked (GlcNAc...) asparagine glycan is attached at N34. Substrate is bound by residues 41–45, K66, and R85; that span reads KPVNT. Catalysis depends on H119, which acts as the Proton donor.

This sequence belongs to the pancreatic ribonuclease family. In terms of assembly, monomer. Interacts with and forms tight 1:1 complexes with RNH1. Dimerization of two such complexes may occur. Interaction with RNH1 inhibits this protein. In terms of tissue distribution, pancreas.

The protein resides in the secreted. The enzyme catalyses an [RNA] containing cytidine + H2O = an [RNA]-3'-cytidine-3'-phosphate + a 5'-hydroxy-ribonucleotide-3'-[RNA].. The catalysed reaction is an [RNA] containing uridine + H2O = an [RNA]-3'-uridine-3'-phosphate + a 5'-hydroxy-ribonucleotide-3'-[RNA].. Its function is as follows. Endonuclease that catalyzes the cleavage of RNA on the 3' side of pyrimidine nucleotides. Acts on single-stranded and double-stranded RNA. The sequence is that of Ribonuclease pancreatic (RNASE1) from Proechimys guairae (Guaira spiny rat).